Reading from the N-terminus, the 107-residue chain is Integration host factor subunit beta (107 aa).

The disordered stretch occupies residues 55 to 107; sequence RRPARVGRNPKSGEKVQVPEKHVPHFKPGKELRERVDGRAGEPLKNDEPEDAQ. A compositionally biased stretch (basic and acidic residues) spans 65–101; the sequence is KSGEKVQVPEKHVPHFKPGKELRERVDGRAGEPLKND.

This sequence belongs to the bacterial histone-like protein family. In terms of assembly, heterodimer of an alpha and a beta chain.

In terms of biological role, this protein is one of the two subunits of integration host factor, a specific DNA-binding protein that functions in genetic recombination as well as in transcriptional and translational control. The polypeptide is Integration host factor subunit beta (Burkholderia pseudomallei (strain K96243)).